A 183-amino-acid polypeptide reads, in one-letter code: Peptide deformylase (183 aa).

2 residues coordinate Fe cation: C110 and H153. E154 is an active-site residue. H157 contacts Fe cation.

Belongs to the polypeptide deformylase family. It depends on Fe(2+) as a cofactor.

It carries out the reaction N-terminal N-formyl-L-methionyl-[peptide] + H2O = N-terminal L-methionyl-[peptide] + formate. Removes the formyl group from the N-terminal Met of newly synthesized proteins. Requires at least a dipeptide for an efficient rate of reaction. N-terminal L-methionine is a prerequisite for activity but the enzyme has broad specificity at other positions. In Listeria welshimeri serovar 6b (strain ATCC 35897 / DSM 20650 / CCUG 15529 / CIP 8149 / NCTC 11857 / SLCC 5334 / V8), this protein is Peptide deformylase.